The primary structure comprises 129 residues: Small ribosomal subunit protein uS11 (129 aa).

It belongs to the universal ribosomal protein uS11 family. In terms of assembly, part of the 30S ribosomal subunit. Interacts with proteins S7 and S18. Binds to IF-3.

In terms of biological role, located on the platform of the 30S subunit, it bridges several disparate RNA helices of the 16S rRNA. Forms part of the Shine-Dalgarno cleft in the 70S ribosome. This is Small ribosomal subunit protein uS11 from Desulforamulus reducens (strain ATCC BAA-1160 / DSM 100696 / MI-1) (Desulfotomaculum reducens).